Consider the following 91-residue polypeptide: Small ribosomal subunit protein uS19 (91 aa).

This sequence belongs to the universal ribosomal protein uS19 family.

In terms of biological role, protein S19 forms a complex with S13 that binds strongly to the 16S ribosomal RNA. The sequence is that of Small ribosomal subunit protein uS19 from Aliarcobacter butzleri (strain RM4018) (Arcobacter butzleri).